A 1249-amino-acid polypeptide reads, in one-letter code: Apoptotic protease-activating factor 1 (1249 aa).

The CARD domain occupies 1-90; sequence MDAKARNCLL…KDLAGLLHSG (90 aa). Residues 106–415 enclose the NB-ARC domain; sequence NTSFVRTVLC…LETEEVEDIL (310 aa). Residues 154–161 and arginine 265 contribute to the ATP site; that span reads GMAGCGKS. The WD 1-1 repeat unit spans residues 613–652; the sequence is PHTDAVYHACFSQDGQRIASCGADKTLQVFKAETGEKLLD. The WD 1-2 repeat unit spans residues 655–694; it reads AHEDEVLCCAFSSDDSYIATCSVDKKVKIWDSGTGKLVHT. The WD 1-3 repeat unit spans residues 697-738; that stretch reads EHSEQVNCCHFTNKSNHLLLATGSNDSFLKLWDLNQKECRNT. Residues 741–780 form a WD 1-4 repeat; it reads GHTNSVTHCRFSPDDELLASCSADGTLKLWDVRSANEKKS. Residues 796-837 form a WD 1-5 repeat; sequence DVEVIVKCCSWSADGDRIIVAAKNKVLLLDIHTSGLLTEIHT. The WD 1-6 repeat unit spans residues 838–877; that stretch reads GHHSTIQYCDFSPYDHLAVIALSQYCVELWNIDSRVKVAD. A WD 1-7 repeat occupies 880 to 910; that stretch reads GHLSWVHGVMFSPDGSSFLTASDDQTIRVWE. The interpropeller linker stretch occupies residues 910–921; it reads ETRKVCKNSAIV. One copy of the WD 2-1 repeat lies at 922-958; the sequence is LKQEIDVVFQENEMMVLAVDNIRGLQLIAGKTGQIDY. The WD 2-2 repeat unit spans residues 959-998; that stretch reads LPEAQVSCCCLSPHLEYVAFGDEEGAIKIIELPNNRVFSS. A WD 2-3 repeat occupies 1001–1040; it reads GHKKAVRHIQFTADGKTLISSSEDSVIQVWNWQTEEYVFL. Residues 1042 to 1080 form a WD 2-4 repeat; it reads AHQETVKDFRLLRDSRLLSWSFDGTVKVWNVITGRIERD. The WD 2-5 repeat unit spans residues 1083–1122; sequence CHQGTVLSCAISSDATKFSSTSADKTAKIWSFELPSPLHE. One copy of the WD 2-6 repeat lies at 1125–1164; sequence GHNSCVRCSAFSLDGILLATGDDNGEIRIWNVSDGQLLHL. Residues 1176–1213 form a WD 2-7 repeat; it reads THGGWVTDVCFSPDRKMLVSAGGYLKWWNVVTGESSQT. The stretch at 1214–1249 is one WD 2-8 repeat; that stretch reads FYTNGTNLKKIHVSPDFRTYVTVDNLGILYILQVLE.

In terms of assembly, monomer. Oligomerizes to a heptameric ring, known as the apoptosome, upon binding of cytochrome c and dATP. Oligomeric Apaf-1 and pro-caspase-9 bind to each other via their respective NH2-terminal CARD domains. Interacts with UACA. Interacts with APIP. Interacts (via CARD and NACHT domains) with NAIP/BIRC1 (via NACHT domain). Interacts with CIAO2A.

It is found in the cytoplasm. Regulates programmed cell death; necessary for normal brain development. Participates with pro-caspase-9 (Apaf-3) in the cytochrome c-dependent activation of caspase-3, leading to apoptosis. This activation requires ATP. The protein is Apoptotic protease-activating factor 1 (Apaf1) of Rattus norvegicus (Rat).